A 406-amino-acid polypeptide reads, in one-letter code: Methyltransferase cfoD (406 aa).

2 residues coordinate S-adenosyl-L-methionine: aspartate 270 and arginine 312. Residue histidine 315 is the Proton acceptor of the active site.

This sequence belongs to the class I-like SAM-binding methyltransferase superfamily. Cation-independent O-methyltransferase family.

The protein operates within secondary metabolite biosynthesis; flavonoid biosynthesis. Methyltransferase; part of the gene cluster that mediates the biosynthesis of chlorflavonin, a fungal flavonoid with acetolactate synthase inhibitory activity. Within the pathway, cfoD is responsible for the methylation at position C3-OH of flavonoid. The pathway begins with the PKS-NRPS hybrid synthetase cfoA that uses benzoic acid or p-hydroxybenzoic acid as a starter unit with four rounds of chain elongation using malonyl-CoA to form the chalcone skeleton. Then, a new type of chalcone isomerase, cfoK, catalyzes the conversion of the chalcone into a flavanone by a histidine-mediated oxa-Michael addition mechanism. The desaturation of flavanone to flavone is catalyzed by a new type of flavone synthase, the flavin mononucleotide (FMN)-dependent oxidoreductase cfoJ. Monooxygenases cfoF, cfoG, and P450 cfoH are responsible for the hydroxylation of the flavonoid skeleton at sites C3, C8, and C2', respectively. Like cfoF, the dehydratase cfoI also plays a role in the hydroxylation of position C3. Methyltransferases cfoB, cfoC, and cfoD then catalyze the methylation of C7-OH, C8-OH, and C3-OH, respectively. Finally, the monooxygenase cfoE is responsible for the chlorination of flavonoid at position C3'. The polypeptide is Methyltransferase cfoD (Aspergillus candidus).